We begin with the raw amino-acid sequence, 727 residues long: Phosphoribosylformylglycinamidine synthase subunit PurL (727 aa).

H47 is a catalytic residue. Y50 and K89 together coordinate ATP. E91 provides a ligand contact to Mg(2+). Residues 92 to 95 and R114 contribute to the substrate site; that span reads SHNH. H93 acts as the Proton acceptor in catalysis. D115 provides a ligand contact to Mg(2+). Substrate is bound at residue Q238. D266 provides a ligand contact to Mg(2+). 310–312 provides a ligand contact to substrate; it reads ESQ. ATP is bound by residues D490 and G527. Position 528 (N528) interacts with Mg(2+). Position 530 (S530) interacts with substrate.

It belongs to the FGAMS family. In terms of assembly, monomer. Part of the FGAM synthase complex composed of 1 PurL, 1 PurQ and 2 PurS subunits.

It is found in the cytoplasm. The enzyme catalyses N(2)-formyl-N(1)-(5-phospho-beta-D-ribosyl)glycinamide + L-glutamine + ATP + H2O = 2-formamido-N(1)-(5-O-phospho-beta-D-ribosyl)acetamidine + L-glutamate + ADP + phosphate + H(+). Its pathway is purine metabolism; IMP biosynthesis via de novo pathway; 5-amino-1-(5-phospho-D-ribosyl)imidazole from N(2)-formyl-N(1)-(5-phospho-D-ribosyl)glycinamide: step 1/2. Its function is as follows. Part of the phosphoribosylformylglycinamidine synthase complex involved in the purines biosynthetic pathway. Catalyzes the ATP-dependent conversion of formylglycinamide ribonucleotide (FGAR) and glutamine to yield formylglycinamidine ribonucleotide (FGAM) and glutamate. The FGAM synthase complex is composed of three subunits. PurQ produces an ammonia molecule by converting glutamine to glutamate. PurL transfers the ammonia molecule to FGAR to form FGAM in an ATP-dependent manner. PurS interacts with PurQ and PurL and is thought to assist in the transfer of the ammonia molecule from PurQ to PurL. In Acidiphilium cryptum (strain JF-5), this protein is Phosphoribosylformylglycinamidine synthase subunit PurL.